A 224-amino-acid polypeptide reads, in one-letter code: Adenylate kinase (224 aa).

10-15 (GSGKGT) contributes to the ATP binding site. An NMP region spans residues 30–59 (ESGAIFRDNIKGGTDLGMKAKAYIDKGDLV). AMP contacts are provided by residues Ser-31, Arg-36, 57-59 (DLV), 85-88 (GFPR), and Gln-92. Residues 126-165 (GRRLCENDNNHPNNIFIDAIKPNGDKCRVCGGALSSRADD) are LID. Residue Arg-127 coordinates ATP. Positions 162 and 174 each coordinate AMP. Asn-211 is a binding site for ATP.

It belongs to the adenylate kinase family. In terms of assembly, monomer.

Its subcellular location is the cytoplasm. It carries out the reaction AMP + ATP = 2 ADP. It participates in purine metabolism; AMP biosynthesis via salvage pathway; AMP from ADP: step 1/1. Its function is as follows. Catalyzes the reversible transfer of the terminal phosphate group between ATP and AMP. Plays an important role in cellular energy homeostasis and in adenine nucleotide metabolism. The chain is Adenylate kinase from Desulforapulum autotrophicum (strain ATCC 43914 / DSM 3382 / VKM B-1955 / HRM2) (Desulfobacterium autotrophicum).